The following is a 304-amino-acid chain: Porphobilinogen deaminase (304 aa).

C240 bears the S-(dipyrrolylmethanemethyl)cysteine mark.

This sequence belongs to the HMBS family. Monomer. Dipyrromethane is required as a cofactor.

The enzyme catalyses 4 porphobilinogen + H2O = hydroxymethylbilane + 4 NH4(+). Its pathway is porphyrin-containing compound metabolism; protoporphyrin-IX biosynthesis; coproporphyrinogen-III from 5-aminolevulinate: step 2/4. Its function is as follows. Tetrapolymerization of the monopyrrole PBG into the hydroxymethylbilane pre-uroporphyrinogen in several discrete steps. The protein is Porphobilinogen deaminase of Xanthomonas oryzae pv. oryzae (strain KACC10331 / KXO85).